A 309-amino-acid chain; its full sequence is Ferredoxin--NADP reductase (309 aa).

The FAD site is built by Asp25, Gln33, Tyr38, Val77, Phe107, Asp267, and Thr307.

Belongs to the ferredoxin--NADP reductase type 2 family. Homodimer. FAD serves as cofactor.

The catalysed reaction is 2 reduced [2Fe-2S]-[ferredoxin] + NADP(+) + H(+) = 2 oxidized [2Fe-2S]-[ferredoxin] + NADPH. The protein is Ferredoxin--NADP reductase of Lactobacillus acidophilus (strain ATCC 700396 / NCK56 / N2 / NCFM).